The primary structure comprises 101 residues: Small ribosomal subunit protein uS10 (101 aa).

This sequence belongs to the universal ribosomal protein uS10 family. Part of the 30S ribosomal subunit.

Functionally, involved in the binding of tRNA to the ribosomes. This Cytophaga hutchinsonii (strain ATCC 33406 / DSM 1761 / CIP 103989 / NBRC 15051 / NCIMB 9469 / D465) protein is Small ribosomal subunit protein uS10.